Consider the following 210-residue polypeptide: Chloramphenicol acetyltransferase (210 aa).

Residue H79 is part of the active site.

This sequence belongs to the transferase hexapeptide repeat family.

The catalysed reaction is chloramphenicol + acetyl-CoA = chloramphenicol 3-acetate + CoA. In terms of biological role, this enzyme is an effector of chloramphenicol resistance in bacteria. The polypeptide is Chloramphenicol acetyltransferase (cat) (Morganella morganii (Proteus morganii)).